A 384-amino-acid chain; its full sequence is GDP/UDP-N,N'-diacetylbacillosamine 2-epimerase (hydrolyzing) (384 aa).

This sequence belongs to the UDP-N-acetylglucosamine 2-epimerase family.

The catalysed reaction is GDP-N,N'-diacetylbacillosamine + H2O = 2,4-diacetamido-2,4,6-trideoxy-alpha-D-mannopyranose + GDP + H(+). It carries out the reaction UDP-N,N'-diacetylbacillosamine + H2O = 2,4-diacetamido-2,4,6-trideoxy-alpha-D-mannopyranose + UDP + H(+). Involved in biosynthesis of legionaminic acid (5,7-diamino-3,5,7,9-tetradeoxy-D-glycero-D-galacto-non-2-ulosonic acid)(Leg), a sialic acid-like derivative that is incorporated into flagellin via O-linkage to Ser/Thr. Catalyzes the conversion of GDP-N,N'-diacetylbacillosamine (Bac2Ac4Ac) into 2,4-diacetamido-2,4,6-trideoxymannose and GDP. It can also use UDP-N,N'-diacetylbacillosamine however it generates small quantities of 2,4-diacetamido-2,4,6-trideoxymannose. This Campylobacter jejuni subsp. jejuni serotype O:2 (strain ATCC 700819 / NCTC 11168) protein is GDP/UDP-N,N'-diacetylbacillosamine 2-epimerase (hydrolyzing) (legG).